The chain runs to 79 residues: Small ribosomal subunit protein bS18 (79 aa).

The protein belongs to the bacterial ribosomal protein bS18 family. Part of the 30S ribosomal subunit. Forms a tight heterodimer with protein bS6.

Its function is as follows. Binds as a heterodimer with protein bS6 to the central domain of the 16S rRNA, where it helps stabilize the platform of the 30S subunit. In Ureaplasma urealyticum serovar 10 (strain ATCC 33699 / Western), this protein is Small ribosomal subunit protein bS18.